A 438-amino-acid polypeptide reads, in one-letter code: MVKRSLLVLALLICLPATLFAQYDYVRISNPFLHKIPIAVPLFQALTGTEPEVKAAQSGADLLADTLEFTRYFNLINRAAFLERPDRTGVTLADIDCKNWRDIGAEFLITGGVTVAGGMMEMELRLFDVFKERMILGKKYKGKPVDQRKMIRRFCAEVMEQLTGTPGIFESRIAFISTGDGSKEIYACEFDGYNPQRITRNSSINLSPAWSSDGQWLAYTSYRKGGPDLYITHLTENRGTVFSKEGINIAPSWVPGQFMLAATLSFEGDQEIYLLTGSGTVVRRLTRSWGIDVSPTFSPDGKRMAFVSGRAGSPQIFIMDMGSGRTQRLTFEGGYNTNPSWNPVNDTIAYCAMTGGAFNVRVIDVKTGATVALTADQGDNESPSWSPDGSLIAFSSTREAGVSRIYVMTAAGTDPRRLLILPGEQTGPKWSPAVAAGR.

The signal sequence occupies residues 1–21 (MVKRSLLVLALLICLPATLFA).

Belongs to the TolB family. The Tol-Pal system is composed of five core proteins: the inner membrane proteins TolA, TolQ and TolR, the periplasmic protein TolB and the outer membrane protein Pal. They form a network linking the inner and outer membranes and the peptidoglycan layer.

It is found in the periplasm. Part of the Tol-Pal system, which plays a role in outer membrane invagination during cell division and is important for maintaining outer membrane integrity. The protein is Tol-Pal system protein TolB of Desulfosudis oleivorans (strain DSM 6200 / JCM 39069 / Hxd3) (Desulfococcus oleovorans).